We begin with the raw amino-acid sequence, 415 residues long: Leucine-rich repeat-containing protein 34 (415 aa).

LRR repeat units follow at residues 246-272 (TLRY…LKSN) and 274-296 (TLEV…LSET).

As to quaternary structure, interacts with NPM1 and NCL.

The protein localises to the nucleus. It is found in the nucleolus. The protein resides in the cytoplasm. In terms of biological role, highly expressed in stem cells where it may be involved in regulation of pluripotency. In embryonic stem cells (ESCs), important for normal expression of the pluripotency regulators POU5F1/OCT4 and KLF4. Also important for expression of the ectodermal marker gene NES and the endodermal marker gene GATA4. Promotes stem cell proliferation in vitro. This chain is Leucine-rich repeat-containing protein 34 (Lrrc34), found in Rattus norvegicus (Rat).